A 1098-amino-acid chain; its full sequence is Gramicidin S synthase 1 (1098 aa).

Residues 538-612 (APRNEIEETL…QLVHYIKDSK (75 aa)) enclose the Carrier domain. Residue Ser-573 is modified to O-(pantetheine 4'-phosphoryl)serine.

The protein belongs to the ATP-dependent AMP-binding enzyme family. Large multienzyme complex of GrsA and GrsB. The cofactor is pantetheine 4'-phosphate.

It catalyses the reaction L-phenylalanine + ATP + H2O = D-phenylalanine + AMP + diphosphate + H(+). It participates in antibiotic biosynthesis; gramicidin S biosynthesis. In terms of biological role, in the first step of peptide synthesis this enzyme activates phenylalanine and racemizes it to the D-isomer. The chain is Gramicidin S synthase 1 (grsA) from Brevibacillus brevis (Bacillus brevis).